The following is a 587-amino-acid chain: Kelch-like protein 3 (587 aa).

Residues 1-22 are disordered; that stretch reads MDGESIKPSSQPLIQTGDDEKN. Residue S10 is modified to Phosphoserine. A BTB domain is found at 50–117; that stretch reads CDVMIVAEDV…IYTAEIEVTE (68 aa). The region spanning 152–254 is the BACK domain; it reads CLGIRAFADV…PRDYLVQTVE (103 aa). At T295 the chain carries Phosphothreonine. Kelch repeat units lie at residues 302–347, 348–394, 396–441, 442–490, 491–537, and 539–585; these read VMIV…FMAG, HVYA…VLND, LYAV…VVEG, KLYA…VLSG, QLYA…AVNG, and LYVV…VIHK. At T375 the chain carries Phosphothreonine. Phosphoserine is present on residues S376 and S433.

The protein belongs to the KLHL3 family. Homodimer. Component of the BCR(KLHL3) E3 ubiquitin ligase complex, at least composed of CUL3 and KLHL3 and RBX1. Interacts with CLDN8. In terms of processing, phosphorylation at Ser-433 by PKA or PKC decreases the interaction with WNK1 and WNK4, leading to inhibit their degradation by the BCR(KLHL3) complex. Phosphorylated at Ser-433 by PKC in response to angiotensin II signaling, decreasing ability to promote degradation of WNK1 and WNK4, leading to activation of Na-Cl cotransporter SLC12A3/NCC. Phosphorylation at Ser-433 is increased by insulin. Dephosphorylated at Ser-433 by calcineurin PPP3CA, promoting degradation of WNK1 and WNK4.

It localises to the cytoplasm. Its subcellular location is the cytoskeleton. It is found in the cytosol. Its pathway is protein modification; protein ubiquitination. Substrate-specific adapter of a BCR (BTB-CUL3-RBX1) E3 ubiquitin ligase complex that acts as a regulator of ion transport in the distal nephron. The BCR(KLHL3) complex acts by mediating ubiquitination and degradation of WNK1 and WNK4, two activators of Na-Cl cotransporter SLC12A3/NCC in distal convoluted tubule cells of kidney, thereby regulating NaCl reabsorption. The BCR(KLHL3) complex also mediates ubiquitination and degradation of WNK3. The BCR(KLHL3) complex also mediates ubiquitination of CLDN8, a tight-junction protein required for paracellular chloride transport in the kidney, leading to its degradation. The chain is Kelch-like protein 3 (KLHL3) from Bos taurus (Bovine).